We begin with the raw amino-acid sequence, 425 residues long: Amidase 1 (425 aa).

Position 2 is an N-acetylalanine (Ala-2). Active-site charge relay system residues include Lys-36 and Ser-113. Ser-137 (acyl-ester intermediate) is an active-site residue.

It belongs to the amidase family. Expressed in cotyledons, leaves and flower buds. Lower levels in roots, stems and siliques.

The protein resides in the cytoplasm. It is found in the nucleus. The protein localises to the nucleoplasm. The catalysed reaction is a monocarboxylic acid amide + H2O = a monocarboxylate + NH4(+). It carries out the reaction indole-3-acetamide + H2O = (indol-3-yl)acetate + NH4(+). It catalyses the reaction 2-phenylacetamide + H2O = 2-phenylacetate + NH4(+). The enzyme catalyses L-asparagine + H2O = L-aspartate + NH4(+). The catalysed reaction is 1-naphthaleneacetamide + H2O = 1-naphthaleneacetate + NH4(+). With respect to regulation, inhibited by phenylmethylsulfonyl fluoride (PMSF). Its function is as follows. Amidase involved in auxin biosynthesis. Converts indole-3-acetamide to indole-3-acetate. Converts phenyl-2-acetamide (PAM) to phenyl-2-acetate. Substrate preference is PAM &gt; IAM. Can also use L-asparagine and 1-naphtalene-acetamide as substrates, but not indole-3-acetonitrile or indole-3-acetyl-L-aspartic acid. This is Amidase 1 from Arabidopsis thaliana (Mouse-ear cress).